Here is a 190-residue protein sequence, read N- to C-terminus: Xanthine phosphoribosyltransferase (190 aa).

Leu20 and Asn27 together coordinate xanthine. 128-132 provides a ligand contact to 5-phospho-alpha-D-ribose 1-diphosphate; sequence ANGEA. Xanthine is bound at residue Lys156.

The protein belongs to the purine/pyrimidine phosphoribosyltransferase family. Xpt subfamily. Homodimer.

The protein resides in the cytoplasm. It catalyses the reaction XMP + diphosphate = xanthine + 5-phospho-alpha-D-ribose 1-diphosphate. It participates in purine metabolism; XMP biosynthesis via salvage pathway; XMP from xanthine: step 1/1. In terms of biological role, converts the preformed base xanthine, a product of nucleic acid breakdown, to xanthosine 5'-monophosphate (XMP), so it can be reused for RNA or DNA synthesis. The polypeptide is Xanthine phosphoribosyltransferase (Clostridium botulinum (strain Eklund 17B / Type B)).